The following is a 280-amino-acid chain: Fructose-1,6-bisphosphatase class 1 (280 aa).

Residues Glu-64, Asp-83, Leu-85, and Asp-86 each contribute to the Mg(2+) site. Residues 86 to 89, Tyr-189, and Lys-220 contribute to the substrate site; that span reads DGSS. Glu-226 is a Mg(2+) binding site.

The protein belongs to the FBPase class 1 family. As to quaternary structure, homotetramer. Mg(2+) is required as a cofactor.

Its subcellular location is the cytoplasm. It catalyses the reaction beta-D-fructose 1,6-bisphosphate + H2O = beta-D-fructose 6-phosphate + phosphate. It participates in carbohydrate biosynthesis; gluconeogenesis. This is Fructose-1,6-bisphosphatase class 1 from Campylobacter jejuni subsp. doylei (strain ATCC BAA-1458 / RM4099 / 269.97).